The primary structure comprises 248 residues: Proteasome subunit alpha (248 aa).

Belongs to the peptidase T1A family. As to quaternary structure, the 20S proteasome core is composed of 14 alpha and 14 beta subunits that assemble into four stacked heptameric rings, resulting in a barrel-shaped structure. The two inner rings, each composed of seven catalytic beta subunits, are sandwiched by two outer rings, each composed of seven alpha subunits. The catalytic chamber with the active sites is on the inside of the barrel. Has a gated structure, the ends of the cylinder being occluded by the N-termini of the alpha-subunits. Is capped by the proteasome-associated ATPase, ARC.

The protein localises to the cytoplasm. It functions in the pathway protein degradation; proteasomal Pup-dependent pathway. Its activity is regulated as follows. The formation of the proteasomal ATPase ARC-20S proteasome complex, likely via the docking of the C-termini of ARC into the intersubunit pockets in the alpha-rings, may trigger opening of the gate for substrate entry. Interconversion between the open-gate and close-gate conformations leads to a dynamic regulation of the 20S proteasome proteolysis activity. Its function is as follows. Component of the proteasome core, a large protease complex with broad specificity involved in protein degradation. The sequence is that of Proteasome subunit alpha from Mycobacterium tuberculosis (strain ATCC 25177 / H37Ra).